The primary structure comprises 154 residues: 3-hydroxyacyl-[acyl-carrier-protein] dehydratase FabZ (154 aa).

Residue histidine 54 is part of the active site.

Belongs to the thioester dehydratase family. FabZ subfamily.

It localises to the cytoplasm. The catalysed reaction is a (3R)-hydroxyacyl-[ACP] = a (2E)-enoyl-[ACP] + H2O. Functionally, involved in unsaturated fatty acids biosynthesis. Catalyzes the dehydration of short chain beta-hydroxyacyl-ACPs and long chain saturated and unsaturated beta-hydroxyacyl-ACPs. The sequence is that of 3-hydroxyacyl-[acyl-carrier-protein] dehydratase FabZ from Shewanella baltica (strain OS223).